The chain runs to 75 residues: Exodeoxyribonuclease 7 small subunit (75 aa).

The protein belongs to the XseB family. In terms of assembly, heterooligomer composed of large and small subunits.

The protein localises to the cytoplasm. The enzyme catalyses Exonucleolytic cleavage in either 5'- to 3'- or 3'- to 5'-direction to yield nucleoside 5'-phosphates.. Functionally, bidirectionally degrades single-stranded DNA into large acid-insoluble oligonucleotides, which are then degraded further into small acid-soluble oligonucleotides. The sequence is that of Exodeoxyribonuclease 7 small subunit from Nostoc punctiforme (strain ATCC 29133 / PCC 73102).